Reading from the N-terminus, the 58-residue chain is uncharacterized protein (58 aa).

2 disordered regions span residues 1–20 (MKKN…MNKK) and 38–58 (IIET…KKQQ).

This is an uncharacterized protein from Bacillus subtilis (strain 168).